The following is a 683-amino-acid chain: UvrABC system protein B (683 aa).

Positions 31–414 (AGFEKGYKEQ…ELERTDHKVE (384 aa)) constitute a Helicase ATP-binding domain. 44-51 (GATGTGKT) contacts ATP. The Beta-hairpin signature appears at 97–120 (YYDYYQPEAYVPQSDTYIEKDSAI). Residues 435–601 (QIDDLVGEIN…TIIKPVHDVI (167 aa)) enclose the Helicase C-terminal domain. Positions 632-667 (KTMIKNLQEQMKEAAKKLDFEEAANLRDAIMELQSS) constitute a UVR domain. The segment at 662–683 (MELQSSSRRPKTRKGKALNGKR) is disordered. Positions 669–683 (RRPKTRKGKALNGKR) are enriched in basic residues.

It belongs to the UvrB family. In terms of assembly, forms a heterotetramer with UvrA during the search for lesions. Interacts with UvrC in an incision complex.

The protein resides in the cytoplasm. The UvrABC repair system catalyzes the recognition and processing of DNA lesions. A damage recognition complex composed of 2 UvrA and 2 UvrB subunits scans DNA for abnormalities. Upon binding of the UvrA(2)B(2) complex to a putative damaged site, the DNA wraps around one UvrB monomer. DNA wrap is dependent on ATP binding by UvrB and probably causes local melting of the DNA helix, facilitating insertion of UvrB beta-hairpin between the DNA strands. Then UvrB probes one DNA strand for the presence of a lesion. If a lesion is found the UvrA subunits dissociate and the UvrB-DNA preincision complex is formed. This complex is subsequently bound by UvrC and the second UvrB is released. If no lesion is found, the DNA wraps around the other UvrB subunit that will check the other stand for damage. This is UvrABC system protein B from Lactobacillus acidophilus (strain ATCC 700396 / NCK56 / N2 / NCFM).